We begin with the raw amino-acid sequence, 601 residues long: Putative ankyrin repeat protein R841 (601 aa).

12 ANK repeats span residues 17–50, 54–86, 91–123, 165–197, 201–234, 238–269, 274–310, 314–349, 361–390, 397–427, 432–463, and 467–500; these read NNIT…DVNA, HGKS…DVNH, QRSV…NINY, RENI…NIDH, YGQT…NINS, KGWS…EINS, NETM…SIDN, KGYT…NINS, VCCD…DVNS, TILM…NPNI, YHKF…DPNI, and IGNN…SYNC.

This is Putative ankyrin repeat protein R841 from Acanthamoeba polyphaga mimivirus (APMV).